Here is a 43-residue protein sequence, read N- to C-terminus: MTKNINQPVAYPIFTFRWLAVHGLAIPTVFFLGGITAMQFIQR.

Residues W18–G34 traverse the membrane as a helical segment. Residue H22 participates in heme binding.

This sequence belongs to the PsbE/PsbF family. In terms of assembly, heterodimer of an alpha subunit and a beta subunit. PSII is composed of 1 copy each of membrane proteins PsbA, PsbB, PsbC, PsbD, PsbE, PsbF, PsbH, PsbI, PsbJ, PsbK, PsbL, PsbM, PsbT, PsbX, PsbY, PsbZ, Psb30/Ycf12, at least 3 peripheral proteins of the oxygen-evolving complex and a large number of cofactors. It forms dimeric complexes. The cofactor is heme b.

The protein localises to the plastid. Its subcellular location is the chloroplast thylakoid membrane. Its function is as follows. This b-type cytochrome is tightly associated with the reaction center of photosystem II (PSII). PSII is a light-driven water:plastoquinone oxidoreductase that uses light energy to abstract electrons from H(2)O, generating O(2) and a proton gradient subsequently used for ATP formation. It consists of a core antenna complex that captures photons, and an electron transfer chain that converts photonic excitation into a charge separation. The chain is Cytochrome b559 subunit beta from Thalassiosira pseudonana (Marine diatom).